Consider the following 288-residue polypeptide: Putative hydrolase LipZ (288 aa).

The protein belongs to the AB hydrolase superfamily.

The polypeptide is Putative hydrolase LipZ (Mycobacterium tuberculosis (strain CDC 1551 / Oshkosh)).